The sequence spans 268 residues: Imidazole glycerol phosphate synthase subunit HisF (268 aa).

Active-site residues include Asp12 and Asp131.

This sequence belongs to the HisA/HisF family. In terms of assembly, heterodimer of HisH and HisF.

Its subcellular location is the cytoplasm. It carries out the reaction 5-[(5-phospho-1-deoxy-D-ribulos-1-ylimino)methylamino]-1-(5-phospho-beta-D-ribosyl)imidazole-4-carboxamide + L-glutamine = D-erythro-1-(imidazol-4-yl)glycerol 3-phosphate + 5-amino-1-(5-phospho-beta-D-ribosyl)imidazole-4-carboxamide + L-glutamate + H(+). The protein operates within amino-acid biosynthesis; L-histidine biosynthesis; L-histidine from 5-phospho-alpha-D-ribose 1-diphosphate: step 5/9. Its function is as follows. IGPS catalyzes the conversion of PRFAR and glutamine to IGP, AICAR and glutamate. The HisF subunit catalyzes the cyclization activity that produces IGP and AICAR from PRFAR using the ammonia provided by the HisH subunit. The chain is Imidazole glycerol phosphate synthase subunit HisF from Methanoculleus marisnigri (strain ATCC 35101 / DSM 1498 / JR1).